We begin with the raw amino-acid sequence, 196 residues long: Holliday junction branch migration complex subunit RuvA (196 aa).

Residues 1–63 are domain I; it reads MYDYIKGTLV…DDAHLLFGFH (63 aa). Residues 64 to 142 are domain II; the sequence is TEDEKEVFLK…ELPAETTNTT (79 aa). The interval 143-146 is flexible linker; sequence ANQT. Residues 147 to 196 are domain III; sequence AGNQQLDEAMEALLALGYKATELKKVKAFFEDTNETAEQYIKSALKMLMK.

The protein belongs to the RuvA family. Homotetramer. Forms an RuvA(8)-RuvB(12)-Holliday junction (HJ) complex. HJ DNA is sandwiched between 2 RuvA tetramers; dsDNA enters through RuvA and exits via RuvB. An RuvB hexamer assembles on each DNA strand where it exits the tetramer. Each RuvB hexamer is contacted by two RuvA subunits (via domain III) on 2 adjacent RuvB subunits; this complex drives branch migration. In the full resolvosome a probable DNA-RuvA(4)-RuvB(12)-RuvC(2) complex forms which resolves the HJ.

It localises to the cytoplasm. Its function is as follows. The RuvA-RuvB-RuvC complex processes Holliday junction (HJ) DNA during genetic recombination and DNA repair, while the RuvA-RuvB complex plays an important role in the rescue of blocked DNA replication forks via replication fork reversal (RFR). RuvA specifically binds to HJ cruciform DNA, conferring on it an open structure. The RuvB hexamer acts as an ATP-dependent pump, pulling dsDNA into and through the RuvAB complex. HJ branch migration allows RuvC to scan DNA until it finds its consensus sequence, where it cleaves and resolves the cruciform DNA. The chain is Holliday junction branch migration complex subunit RuvA from Streptococcus thermophilus (strain ATCC BAA-491 / LMD-9).